The primary structure comprises 114 residues: Putative antiporter subunit mnhC2 (114 aa).

Transmembrane regions (helical) follow at residues leucine 3 to isoleucine 23, isoleucine 28 to threonine 48, and alanine 72 to valine 92.

Belongs to the CPA3 antiporters (TC 2.A.63) subunit C family. As to quaternary structure, may form a heterooligomeric complex that consists of seven subunits: mnhA2, mnhB2, mnhC2, mnhD2, mnhE2, mnhF2 and mnhG2.

The protein resides in the cell membrane. The polypeptide is Putative antiporter subunit mnhC2 (mnhC2) (Staphylococcus aureus (strain MRSA252)).